Here is a 361-residue protein sequence, read N- to C-terminus: MVHAEAFSRPLSRNEVVGLIFRLTIFGAVTYFTIKWMVDAIDPTRKQKVEAQKQAEKLMKQIGVKNVKLSEYEMSIAAHLVDPLNMHVTWSDIAGLDDVITDLKDTVILPIKKKHLFENSRLLQPPKGVLLYGPPGCGKTLIAKATAKEAGCRFINLQPSTLTDKWYGESQKLAAAVFSLAIKLQPSIIFIDEIDSFLRNRSSSDHEATAMMKAQFMSLWDGLDTDHSCQVIVMGATNRPQDLDSAIMRRMPTRFHINQPALKQREAILKLILKNENVDRHVDLLEVAQETDGFSGSDLKEMCRDAALLCVREYVNSTSEESHDEDEIRPVQQQDLHRAIEKMKKSKDAAFQNVLTHVCLD.

Topologically, residues M1–E15 are mitochondrial intermembrane. A helical membrane pass occupies residues V16–F32. Residues T33–D361 lie on the Cytoplasmic side of the membrane. G133 to T140 contributes to the ATP binding site. The residue at position 322 (S322) is a Phosphoserine.

It belongs to the AAA ATPase family. MSP1 subfamily. In terms of assembly, interacts with GRIA2 and GRIP1 in an ATP-dependent manner. ATAD1-catalyzed ATP hydrolysis disrupts not only its binding to GRIA2 and GRIP1, but also interaction between GRIP1 and GRIA2, leading to AMPAR complex disassembly.

It is found in the mitochondrion outer membrane. It localises to the peroxisome membrane. Its subcellular location is the postsynaptic cell membrane. It carries out the reaction [protein]-with a C-terminal TM segment(out) + ATP + H2O = [protein]-with a C-terminal TM segment(in) + ADP + phosphate + H(+). Its function is as follows. Outer mitochondrial translocase required to remove mislocalized tail-anchored transmembrane proteins on mitochondria. Specifically recognizes and binds tail-anchored transmembrane proteins: acts as a dislocase that mediates the ATP-dependent extraction of mistargeted tail-anchored transmembrane proteins from the mitochondrion outer membrane. Also plays a critical role in regulating the surface expression of AMPA receptors (AMPAR), thereby regulating synaptic plasticity and learning and memory. Required for NMDA-stimulated AMPAR internalization and inhibition of GRIA1 and GRIA2 recycling back to the plasma membrane; these activities are ATPase-dependent. This chain is Outer mitochondrial transmembrane helix translocase, found in Homo sapiens (Human).